The primary structure comprises 772 residues: Tubulin monoglycylase TTLL3 (772 aa).

The segment at 50–81 (PTLLPPQKDLDSSAMGDSDTTEDEDEDEDEEF) is disordered. Residues 68-81 (DTTEDEDEDEDEEF) show a composition bias toward acidic residues. The region spanning 151 to 510 (ARNVLKLVVK…RMLDRNCDTG (360 aa)) is the TTL domain. Residues Lys283, 289-290 (RG), 321-324 (QKYI), 334-336 (KFD), and 378-379 (CN) each bind ATP. Arg289 provides a ligand contact to a protein. Ser381 provides a ligand contact to L-glutamate. Positions 456, 469, and 471 each coordinate Mg(2+). An ATP-binding site is contributed by Glu469.

Mg(2+) serves as cofactor. In terms of tissue distribution, expressed in brain, heart, kidney, testis, liver, lung, muscle, spleen, trachea and colon.

Its subcellular location is the cytoplasm. It is found in the cytoskeleton. The protein resides in the cell projection. The protein localises to the cilium. It localises to the cilium axoneme. Its subcellular location is the flagellum axoneme. The enzyme catalyses L-glutamyl-[protein] + glycine + ATP = glycyl-L-glutamyl-[protein] + ADP + phosphate + H(+). Functionally, monoglycylase which modifies alpha- and beta-tubulin, adding a single glycine on the gamma-carboxyl groups of specific glutamate residues to generate monoglycine side chains within the C-terminal tail of tubulin. Not involved in elongation step of the polyglycylation reaction. Preferentially glycylates a beta-tail peptide over the alpha-tail, although shifts its preference toward alpha-tail as beta-tail glutamylation increases. Competes with polyglutamylases for modification site on beta-tubulin substrate, thereby creating an anticorrelation between glycylation and glutamylation reactions. Together with TTLL8, mediates microtubule glycylation of primary and motile cilia, which is essential for their stability and maintenance. Involved in microtubule glycylation of primary cilia in colon which controls cell proliferation of epithelial cells and plays an essential role in colon cancer development. Together with TTLL8, glycylates sperm flagella which regulates axonemal dynein motor activity, thereby controlling flagellar beat, directional sperm swimming and male fertility. The chain is Tubulin monoglycylase TTLL3 from Homo sapiens (Human).